A 195-amino-acid chain; its full sequence is Transcriptional regulator GfcR (195 aa).

It belongs to the purine/pyrimidine phosphoribosyltransferase family. GfcR subfamily.

In Archaeoglobus fulgidus (strain ATCC 49558 / DSM 4304 / JCM 9628 / NBRC 100126 / VC-16), this protein is Transcriptional regulator GfcR.